The chain runs to 349 residues: Anthranilate phosphoribosyltransferase (349 aa).

5-phospho-alpha-D-ribose 1-diphosphate-binding positions include glycine 82, glycine 85 to aspartate 86, asparagine 92 to threonine 95, lysine 110 to glycine 118, and serine 122. Position 82 (glycine 82) interacts with anthranilate. Serine 94 provides a ligand contact to Mg(2+). Asparagine 113 serves as a coordination point for anthranilate. Arginine 168 contacts anthranilate. The Mg(2+) site is built by aspartate 227 and glutamate 228.

The protein belongs to the anthranilate phosphoribosyltransferase family. Homodimer. Requires Mg(2+) as cofactor.

It carries out the reaction N-(5-phospho-beta-D-ribosyl)anthranilate + diphosphate = 5-phospho-alpha-D-ribose 1-diphosphate + anthranilate. It participates in amino-acid biosynthesis; L-tryptophan biosynthesis; L-tryptophan from chorismate: step 2/5. In terms of biological role, catalyzes the transfer of the phosphoribosyl group of 5-phosphorylribose-1-pyrophosphate (PRPP) to anthranilate to yield N-(5'-phosphoribosyl)-anthranilate (PRA). In Pseudomonas entomophila (strain L48), this protein is Anthranilate phosphoribosyltransferase.